A 122-amino-acid polypeptide reads, in one-letter code: Cofilin/actin-depolymerizing factor homolog 1 (122 aa).

Residues 4-122 enclose the ADF-H domain; it reads GIRVNDNCVT…ESAQDVADLK (119 aa).

Belongs to the actin-binding proteins ADF family. Interacts with monomeric actin, does not bind to actin polymers.

It is found in the cytoplasm. The protein resides in the cytoskeleton. Its function is as follows. Not involved in actin polymerisation, instead functions to stimulate nucleotide exchange on monomeric actin and influence turnover of the small amount of cytosolic actin microfilaments. Essential for erythrocytic schizogony. The polypeptide is Cofilin/actin-depolymerizing factor homolog 1 (Plasmodium falciparum (isolate 3D7)).